Reading from the N-terminus, the 247-residue chain is Flavin-dependent thymidylate synthase (247 aa).

The ThyX domain occupies 1 to 237 (MRVRLLEATE…PHTFEYYDAE (237 aa)). DUMP is bound by residues 85 to 88 (QLTR), 98 to 100 (SMR), and Arg176. An FAD-binding site is contributed by 88–90 (RHR). A ThyX motif motif is present at residues 88–98 (RHRHASFDVQS). FAD-binding positions include 192 to 194 (NPR) and His198. Arg203 is a binding site for dUMP. Catalysis depends on Arg203, which acts as the Involved in ionization of N3 of dUMP, leading to its activation.

This sequence belongs to the thymidylate synthase ThyX family. Homotetramer. FAD is required as a cofactor.

It carries out the reaction dUMP + (6R)-5,10-methylene-5,6,7,8-tetrahydrofolate + NADPH + H(+) = dTMP + (6S)-5,6,7,8-tetrahydrofolate + NADP(+). It participates in pyrimidine metabolism; dTTP biosynthesis. Catalyzes the reductive methylation of 2'-deoxyuridine-5'-monophosphate (dUMP) to 2'-deoxythymidine-5'-monophosphate (dTMP) while utilizing 5,10-methylenetetrahydrofolate (mTHF) as the methyl donor, and NADPH and FADH(2) as the reductant. The sequence is that of Flavin-dependent thymidylate synthase from Halobacterium salinarum (strain ATCC 700922 / JCM 11081 / NRC-1) (Halobacterium halobium).